The primary structure comprises 205 residues: Large ribosomal subunit protein uL4 (205 aa).

Belongs to the universal ribosomal protein uL4 family. As to quaternary structure, part of the 50S ribosomal subunit.

In terms of biological role, one of the primary rRNA binding proteins, this protein initially binds near the 5'-end of the 23S rRNA. It is important during the early stages of 50S assembly. It makes multiple contacts with different domains of the 23S rRNA in the assembled 50S subunit and ribosome. Forms part of the polypeptide exit tunnel. This is Large ribosomal subunit protein uL4 from Thermus thermophilus (strain ATCC BAA-163 / DSM 7039 / HB27).